Consider the following 360-residue polypeptide: 3-dehydroquinate synthase (360 aa).

Residues 70–75 (DGEKYK), 104–108 (GVIGD), 128–129 (TT), Lys141, and Lys150 each bind NAD(+). Residues Glu183, His246, and His263 each contribute to the Zn(2+) site.

The protein belongs to the sugar phosphate cyclases superfamily. Dehydroquinate synthase family. Co(2+) serves as cofactor. It depends on Zn(2+) as a cofactor. The cofactor is NAD(+).

It is found in the cytoplasm. The enzyme catalyses 7-phospho-2-dehydro-3-deoxy-D-arabino-heptonate = 3-dehydroquinate + phosphate. The protein operates within metabolic intermediate biosynthesis; chorismate biosynthesis; chorismate from D-erythrose 4-phosphate and phosphoenolpyruvate: step 2/7. In terms of biological role, catalyzes the conversion of 3-deoxy-D-arabino-heptulosonate 7-phosphate (DAHP) to dehydroquinate (DHQ). The sequence is that of 3-dehydroquinate synthase from Acinetobacter baumannii (strain SDF).